The sequence spans 294 residues: Cytidine deaminase (294 aa).

2 CMP/dCMP-type deaminase domains span residues 48-168 and 186-294; these read DEDA…FGPK and VSGD…VLLG. Substrate is bound at residue 89-91; sequence NME. Residue His102 participates in Zn(2+) binding. The active-site Proton donor is Glu104. The Zn(2+) site is built by Cys129 and Cys132.

Belongs to the cytidine and deoxycytidylate deaminase family. Homodimer. Zn(2+) serves as cofactor.

It carries out the reaction cytidine + H2O + H(+) = uridine + NH4(+). It catalyses the reaction 2'-deoxycytidine + H2O + H(+) = 2'-deoxyuridine + NH4(+). Its function is as follows. This enzyme scavenges exogenous and endogenous cytidine and 2'-deoxycytidine for UMP synthesis. The polypeptide is Cytidine deaminase (Klebsiella pneumoniae (strain 342)).